The sequence spans 121 residues: Cytochrome c2 iso-2 (121 aa).

Heme c contacts are provided by C15, C18, H19, and M98.

It belongs to the cytochrome c family. Post-translationally, binds 1 heme c group covalently per subunit.

In terms of biological role, cytochrome c2 is found mainly in purple, non-sulfur, photosynthetic bacteria where it functions as the electron donor to the oxidized bacteriochlorophyll in the photophosphorylation pathway. However, it may also have a role in the respiratory chain and is found in some non-photosynthetic bacteria. The chain is Cytochrome c2 iso-2 from Rhodospirillum centenum (Rhodocista centenaria).